Consider the following 135-residue polypeptide: Putative large ribosomal subunit protein eL32' (135 aa).

The protein belongs to the eukaryotic ribosomal protein eL32 family.

The protein is Putative large ribosomal subunit protein eL32' (Rpl32-ps) of Mus musculus (Mouse).